Reading from the N-terminus, the 263-residue chain is Purine nucleoside phosphorylase SAS1121 (263 aa).

Zn(2+) is bound by residues histidine 79, cysteine 124, and histidine 141.

It belongs to the purine nucleoside phosphorylase YfiH/LACC1 family. As to quaternary structure, homodimer. Requires Cu(2+) as cofactor. It depends on Zn(2+) as a cofactor.

It carries out the reaction adenosine + phosphate = alpha-D-ribose 1-phosphate + adenine. The enzyme catalyses S-methyl-5'-thioadenosine + phosphate = 5-(methylsulfanyl)-alpha-D-ribose 1-phosphate + adenine. The catalysed reaction is inosine + phosphate = alpha-D-ribose 1-phosphate + hypoxanthine. It catalyses the reaction adenosine + H2O + H(+) = inosine + NH4(+). Its function is as follows. Purine nucleoside enzyme that catalyzes the phosphorolysis of adenosine and inosine nucleosides, yielding D-ribose 1-phosphate and the respective free bases, adenine and hypoxanthine. Also catalyzes the phosphorolysis of S-methyl-5'-thioadenosine into adenine and S-methyl-5-thio-alpha-D-ribose 1-phosphate. Also has adenosine deaminase activity. This is Purine nucleoside phosphorylase SAS1121 from Staphylococcus aureus (strain MSSA476).